A 198-amino-acid chain; its full sequence is Nucleoid occlusion factor SlmA (198 aa).

In terms of domain architecture, HTH tetR-type spans 10 to 70 (NRREEILQSL…SLIEFIEDSL (61 aa)). The H-T-H motif DNA-binding region spans 33–52 (TTAKLAASVGVSEAALYRHF). A coiled-coil region spans residues 117 to 144 (EQDRLQGRINQLFERIEAQLRQVLREKR).

It belongs to the nucleoid occlusion factor SlmA family. Homodimer. Interacts with FtsZ.

It localises to the cytoplasm. It is found in the nucleoid. Its function is as follows. Required for nucleoid occlusion (NO) phenomenon, which prevents Z-ring formation and cell division over the nucleoid. Acts as a DNA-associated cell division inhibitor that binds simultaneously chromosomal DNA and FtsZ, and disrupts the assembly of FtsZ polymers. SlmA-DNA-binding sequences (SBS) are dispersed on non-Ter regions of the chromosome, preventing FtsZ polymerization at these regions. The sequence is that of Nucleoid occlusion factor SlmA from Citrobacter koseri (strain ATCC BAA-895 / CDC 4225-83 / SGSC4696).